Here is a 73-residue protein sequence, read N- to C-terminus: Protein SlyX homolog (73 aa).

It belongs to the SlyX family.

This chain is Protein SlyX homolog, found in Haemophilus influenzae (strain PittEE).